A 313-amino-acid chain; its full sequence is Porphobilinogen deaminase (313 aa).

Cys-242 bears the S-(dipyrrolylmethanemethyl)cysteine mark.

Belongs to the HMBS family. As to quaternary structure, monomer. The cofactor is dipyrromethane.

It carries out the reaction 4 porphobilinogen + H2O = hydroxymethylbilane + 4 NH4(+). Its pathway is porphyrin-containing compound metabolism; protoporphyrin-IX biosynthesis; coproporphyrinogen-III from 5-aminolevulinate: step 2/4. In terms of biological role, tetrapolymerization of the monopyrrole PBG into the hydroxymethylbilane pre-uroporphyrinogen in several discrete steps. The chain is Porphobilinogen deaminase from Pseudomonas syringae pv. syringae (strain B728a).